Here is a 580-residue protein sequence, read N- to C-terminus: Ran GTPase-activating protein 1 (580 aa).

7 LRR repeats span residues 48-71 (YEGLQALRLEGNTVGVEAAKAIAE), 111-134 (GAQLTELDLSDNAFGPDGVRGFEA), 141-168 (CFTLQELKLNNCGMGIGGGKILAAALTE), 207-230 (IGTLEEVHMPQNGINHAGITALAE), 235-258 (NSLLKVINLNDNTFTEKGGVAMAE), 292-315 (LHKLKDLNLSYCEIKADAAVSLAE), and 320-343 (KSDLEKLDLNGNCLGEEGCEQVQE). Residues 356–429 (SLSDDEDEDD…PPKLPVDAST (74 aa)) form a disordered region. Over residues 358–399 (SDDEDEDDDDDDEDDDDDEDDENDDEEVEEEEEEVEEEEGGD) the composition is skewed to acidic residues.

The protein belongs to the RNA1 family. As to quaternary structure, homodimer. Identified in a complex with RANBP2 and the ubiquitin-conjugating enzyme E2 (UBE2I). Post-translationally, may be sumoylated.

The protein localises to the cytoplasm. The protein resides in the nucleus. Its subcellular location is the nucleoplasm. It is found in the nucleus envelope. It localises to the chromosome. The protein localises to the centromere. The protein resides in the kinetochore. Its subcellular location is the cytoskeleton. It is found in the spindle. GTPase activator for RAN, converting it to the GDP-bound state. Converts cytoplasmic GTP-bound RAN to GDP-bound RAN, which is required for RAN-mediated nuclear import and export. The polypeptide is Ran GTPase-activating protein 1 (rangap1) (Xenopus laevis (African clawed frog)).